The chain runs to 427 residues: 3-phosphoshikimate 1-carboxyvinyltransferase (427 aa).

The 3-phosphoshikimate site is built by Lys22, Ser23, and Arg27. Phosphoenolpyruvate is bound at residue Lys22. Phosphoenolpyruvate is bound by residues Gly96 and Arg124. Residues Ser169, Ser170, Gln171, Ser197, Asp313, Asn336, and Lys340 each contribute to the 3-phosphoshikimate site. Gln171 is a phosphoenolpyruvate binding site. Asp313 acts as the Proton acceptor in catalysis. Residues Arg344, Arg386, and Lys411 each contribute to the phosphoenolpyruvate site.

Belongs to the EPSP synthase family. As to quaternary structure, monomer.

It is found in the cytoplasm. It catalyses the reaction 3-phosphoshikimate + phosphoenolpyruvate = 5-O-(1-carboxyvinyl)-3-phosphoshikimate + phosphate. Its pathway is metabolic intermediate biosynthesis; chorismate biosynthesis; chorismate from D-erythrose 4-phosphate and phosphoenolpyruvate: step 6/7. Functionally, catalyzes the transfer of the enolpyruvyl moiety of phosphoenolpyruvate (PEP) to the 5-hydroxyl of shikimate-3-phosphate (S3P) to produce enolpyruvyl shikimate-3-phosphate and inorganic phosphate. The polypeptide is 3-phosphoshikimate 1-carboxyvinyltransferase (Salmonella heidelberg (strain SL476)).